The chain runs to 29 residues: Conotoxin Bu17 (29 aa).

Cystine bridges form between C4–C19, C5–C25, and C15–C26. Cysteine amide is present on C26.

This sequence belongs to the conotoxin M superfamily. In terms of tissue distribution, expressed by the venom duct.

It localises to the secreted. The chain is Conotoxin Bu17 from Conus bullatus (Bubble cone).